We begin with the raw amino-acid sequence, 234 residues long: Accessory gland protein Acp29AB (234 aa).

The first 21 residues, 1-21 (MYATNLLYLLALWNLWLVSGG), serve as a signal peptide directing secretion. Residues Asn-29, Asn-61, Asn-127, and Asn-164 are each glycosylated (N-linked (GlcNAc...) asparagine). The 98-residue stretch at 137–234 (VTCREMNGHL…SFVCQANQWA (98 aa)) folds into the C-type lectin domain. 2 disulfides stabilise this stretch: Cys-139–Cys-228 and Cys-207–Cys-220.

Its subcellular location is the secreted. Functionally, responsible for physiological and behavioral changes in mated female flies. The protein is Accessory gland protein Acp29AB (Acp29AB) of Drosophila simulans (Fruit fly).